A 352-amino-acid polypeptide reads, in one-letter code: N-terminal EF-hand calcium-binding protein 1 (352 aa).

The residue at position 4 (S4) is a Phosphoserine. EF-hand domains follow at residues 26-61 (KGMS…GVLS) and 60-95 (LSGE…HLGE). Ca(2+) is bound by residues D39, N41, D43, K45, and E50. A coiled-coil region spans residues 135–163 (LLKETLNQLQSLQNSLECAMETTEEQTRQ). The segment at 180 to 202 (GKRSSRRVQRHNSFSPNSPQFNV) is disordered. Polar residues predominate over residues 190–202 (HNSFSPNSPQFNV). Phosphoserine is present on residues S192 and S197. Residues 209–275 (EEDNQWMTQI…EEFQLALKHY (67 aa)) adopt a coiled-coil conformation. In terms of domain architecture, ABM spans 252–340 (MLVQRQMSVI…LETPELTSTM (89 aa)).

As to quaternary structure, interacts with STX1. May interact with CPNE6.

The protein localises to the cytoplasm. In Pongo abelii (Sumatran orangutan), this protein is N-terminal EF-hand calcium-binding protein 1 (NECAB1).